A 317-amino-acid chain; its full sequence is MYNYLDFEKPVADLEGQILELKKLAQEQGSVEMGDEISRLEKRSADALKDIYRKLTPWQKAQIARHPDRPHCLEYIDRLFTEFTPLAGDRKFANDEALQAGFGRFNGTPVAIIGQEKGSDTKTRLKHNFGSARPEGYRKAVRIMEMADRFQLPLITFVDTAGAYPGVSAEERGQAEAIARSTAECLKLRVPVISIIIGEGGSGGAIAIAVANRVYMLEHSIYSVISPEGAASILWHDSTRAKDAASNMRITAQDLFDLKIIDGIIPEPLGGAHRGKESVIDAAGDIIAASLRSMKDIDGETLKQERRQKFLEIGRNI.

Residues 40–293 (LEKRSADALK…GDIIAASLRS (254 aa)) form the CoA carboxyltransferase C-terminal domain.

The protein belongs to the AccA family. As to quaternary structure, acetyl-CoA carboxylase is a heterohexamer composed of biotin carboxyl carrier protein (AccB), biotin carboxylase (AccC) and two subunits each of ACCase subunit alpha (AccA) and ACCase subunit beta (AccD).

The protein localises to the cytoplasm. It catalyses the reaction N(6)-carboxybiotinyl-L-lysyl-[protein] + acetyl-CoA = N(6)-biotinyl-L-lysyl-[protein] + malonyl-CoA. Its pathway is lipid metabolism; malonyl-CoA biosynthesis; malonyl-CoA from acetyl-CoA: step 1/1. Functionally, component of the acetyl coenzyme A carboxylase (ACC) complex. First, biotin carboxylase catalyzes the carboxylation of biotin on its carrier protein (BCCP) and then the CO(2) group is transferred by the carboxyltransferase to acetyl-CoA to form malonyl-CoA. The chain is Acetyl-coenzyme A carboxylase carboxyl transferase subunit alpha from Brucella abortus (strain S19).